The chain runs to 336 residues: tRNA N6-adenosine threonylcarbamoyltransferase (336 aa).

Fe cation is bound by residues His-114 and His-118. Substrate-binding positions include 136–140 (LVSGG), Asp-169, Gly-182, Asp-186, and Asn-275. Asp-301 contacts Fe cation.

It belongs to the KAE1 / TsaD family. Requires Fe(2+) as cofactor.

It is found in the cytoplasm. It carries out the reaction L-threonylcarbamoyladenylate + adenosine(37) in tRNA = N(6)-L-threonylcarbamoyladenosine(37) in tRNA + AMP + H(+). Functionally, required for the formation of a threonylcarbamoyl group on adenosine at position 37 (t(6)A37) in tRNAs that read codons beginning with adenine. Is involved in the transfer of the threonylcarbamoyl moiety of threonylcarbamoyl-AMP (TC-AMP) to the N6 group of A37, together with TsaE and TsaB. TsaD likely plays a direct catalytic role in this reaction. The chain is tRNA N6-adenosine threonylcarbamoyltransferase from Streptococcus pneumoniae (strain JJA).